Consider the following 89-residue polypeptide: Small ribosomal subunit protein uS17 (89 aa).

It belongs to the universal ribosomal protein uS17 family. As to quaternary structure, part of the 30S ribosomal subunit.

One of the primary rRNA binding proteins, it binds specifically to the 5'-end of 16S ribosomal RNA. This Acidovorax ebreus (strain TPSY) (Diaphorobacter sp. (strain TPSY)) protein is Small ribosomal subunit protein uS17.